The chain runs to 208 residues: 3-demethoxyubiquinol 3-hydroxylase (208 aa).

Glu57, Glu87, His90, Glu139, Glu171, and His174 together coordinate Fe cation.

This sequence belongs to the COQ7 family. Fe cation is required as a cofactor.

It is found in the cell membrane. It catalyses the reaction a 5-methoxy-2-methyl-3-(all-trans-polyprenyl)benzene-1,4-diol + AH2 + O2 = a 3-demethylubiquinol + A + H2O. Its pathway is cofactor biosynthesis; ubiquinone biosynthesis. Catalyzes the hydroxylation of 2-nonaprenyl-3-methyl-6-methoxy-1,4-benzoquinol during ubiquinone biosynthesis. The polypeptide is 3-demethoxyubiquinol 3-hydroxylase (Burkholderia ambifaria (strain MC40-6)).